Reading from the N-terminus, the 179-residue chain is Apoptosis regulator Bcl-2 homolog (179 aa).

A BH1 motif is present at residues 76-95 (ELFKDLINWGRICGFIVFSA). The BH2 motif lies at 126–141 (PWMISHGGQEEFLAFS).

This sequence belongs to the Bcl-2 family. In terms of assembly, interacts with host BECN1 (via BH3 homology domain); this interaction allows the virus to inhibit BECN1, and thus autophagy. Interacts with host BID. Interacts with host BAX.

Its subcellular location is the host mitochondrion. The protein localises to the host endoplasmic reticulum. Suppresses apoptosis in host cell to promote the viral replication. Has the ability to potentially bind to all the members of the proapoptotic Bcl-2 family. Inhibits autophagy by interacting with host Beclin 1 (BECN1). This is Apoptosis regulator Bcl-2 homolog from Ornithodoros (relapsing fever ticks).